The primary structure comprises 562 residues: Efflux pump apf11 (562 aa).

Low complexity-rich tracts occupy residues 1–10 (MGDISAATKA) and 18–30 (TPETNTTSSSSDT). Residues 1-36 (MGDISAATKAPAPPTPATPETNTTSSSSDTDVQHEP) are disordered. An N-linked (GlcNAc...) asparagine glycan is attached at N22. The next 8 membrane-spanning stretches (helical) occupy residues 46 to 66 (LVIFALGLAILVGVLDATIVA), 83 to 103 (AWYGSAYLLVTGATQPIFGKI), 110 to 130 (KLVFLSSVAILEVGSLVCALA), 141 to 161 (AIAGLGAAGVISGGLIITALT), 169 to 189 (VYTAILGSLEGVGVIIGPIIG), 200 to 220 (WCFWINLPIGAVLCAILVFCL), 249 to 269 (GGLAIAGSITCLLLALEWGGT), and 278 to 298 (IIVLLVVFGVSLICVAVHQHW). N-linked (GlcNAc...) asparagine glycosylation is present at N312. A run of 6 helical transmembrane segments spans residues 317-337 (MFLLCGLCFAGAQFTVLYYLP), 356-376 (LAMVVSVIVVSVIAGGSAGAV), 382-404 (FVFFATIFSSIGAGMLYTLHPSI), 414-434 (ILFGAGSGTGIQQAIVGVQVA), 447-467 (VMLVNTLAGSIFIAVSQTLFL), and 516-536 (FLIGLVLCSITVLTWPLIRWI).

The protein belongs to the major facilitator superfamily. TCR/Tet family.

It localises to the membrane. It functions in the pathway secondary metabolite biosynthesis. In terms of biological role, efflux pump; part of the gene cluster that mediates the biosynthesis of the cyclic tetrapeptide apicidin F (APF). The sequence is that of Efflux pump apf11 (apf11) from Gibberella fujikuroi (strain CBS 195.34 / IMI 58289 / NRRL A-6831) (Bakanae and foot rot disease fungus).